A 320-amino-acid chain; its full sequence is Dual oxidase maturation factor 2 (320 aa).

A helical membrane pass occupies residues Val-22–Leu-42. Topologically, residues Pro-43–Trp-51 are cytoplasmic. The chain crosses the membrane as a helical span at residues Phe-52–Phe-72. Topologically, residues Ser-73–Thr-183 are extracellular. Asn-84, Asn-109, and Asn-121 each carry an N-linked (GlcNAc...) asparagine glycan. Residues Leu-184–Leu-204 traverse the membrane as a helical segment. Topologically, residues Tyr-205–Gly-206 are cytoplasmic. The helical transmembrane segment at Gly-207–Ile-227 threads the bilayer. Residues Ser-228–Ser-249 lie on the Extracellular side of the membrane. The chain crosses the membrane as a helical span at residues Phe-250–Leu-270. Residues His-271–Leu-320 are Cytoplasmic-facing.

This sequence belongs to the DUOXA family. In terms of assembly, heterodimer with DUXA2; disulfide-linked. Interacts with CSNK1G2. In terms of processing, N-glycosylated.

The protein resides in the endoplasmic reticulum membrane. Its function is as follows. Required for the maturation and the transport from the endoplasmic reticulum to the plasma membrane of functional DUOX2. May play a role in thyroid hormone synthesis. This is Dual oxidase maturation factor 2 (Duoxa2) from Mus musculus (Mouse).